The following is a 127-amino-acid chain: MNLIQILEQEEIARLNKTIPSFAPGDTVIVNVNVVEGTRKRVQAYEGVVIAKRNRGLNSGFTVRKISSGEGVERTFQTYSPLIASIEVKRRGDVRRAKLYYLRERSGKSARIKEKLPSRVKAAAVAA.

This sequence belongs to the bacterial ribosomal protein bL19 family.

In terms of biological role, this protein is located at the 30S-50S ribosomal subunit interface and may play a role in the structure and function of the aminoacyl-tRNA binding site. This chain is Large ribosomal subunit protein bL19, found in Acidovorax ebreus (strain TPSY) (Diaphorobacter sp. (strain TPSY)).